Here is a 485-residue protein sequence, read N- to C-terminus: MTKTERYAQLRSMIPEMRRIKRIHFVGIGGAGMGGIAEVLVNEGYQISGSDIAINSVTERLASLGAKIIIGHQAQSVEQVDVVVVSTAINPQNPEIIAAKELRIPIVRRAEMLAELMRYRHGVAIAGTHGKTTTTSLIASVYGQADRDPTFVIGGLLNSAGTNARLGTSRYLIAEADESDASFLHLQPMVSVITNIEADHMDTYGGDFEKLKTTFVDFLHNLPFYGVAVMCIDDEVIREIMPRIGRQVVTYGFSEEADVQAINFAQNGHQSSFTVKRHGKDNVDIVLNLPGEHNVLNALAAIAVASEDDIDDSAIVQALAEFEGIGRRFQHLGEFETPNGSVMLVDDYGHHPSEVLATIKAARAGWPDKRLVMAYQPHRYSRTRDLYEDFVDVLSQVDCLLLLDVYAAGEAPIPGADGRALCRSIRLRGQIDPIFIASPDQLAAVLPDVLQHGDLFMTQGAGNIGALSKELAQSNLGCKVLVEEQ.

ATP is bound at residue 127–133; the sequence is GTHGKTT.

This sequence belongs to the MurCDEF family.

The protein resides in the cytoplasm. The catalysed reaction is UDP-N-acetyl-alpha-D-muramate + L-alanine + ATP = UDP-N-acetyl-alpha-D-muramoyl-L-alanine + ADP + phosphate + H(+). Its pathway is cell wall biogenesis; peptidoglycan biosynthesis. In terms of biological role, cell wall formation. In Shewanella frigidimarina (strain NCIMB 400), this protein is UDP-N-acetylmuramate--L-alanine ligase.